The primary structure comprises 405 residues: Acetylornithine aminotransferase (405 aa).

Pyridoxal 5'-phosphate contacts are provided by residues 107–108 (GA) and Phe-140. Arg-143 lines the N(2)-acetyl-L-ornithine pocket. Position 225–228 (225–228 (DEVQ)) interacts with pyridoxal 5'-phosphate. Lys-254 carries the post-translational modification N6-(pyridoxal phosphate)lysine. Ser-282 is a N(2)-acetyl-L-ornithine binding site. Pyridoxal 5'-phosphate is bound at residue Thr-283.

It belongs to the class-III pyridoxal-phosphate-dependent aminotransferase family. ArgD subfamily. As to quaternary structure, homodimer. Pyridoxal 5'-phosphate is required as a cofactor.

The protein localises to the cytoplasm. It catalyses the reaction N(2)-acetyl-L-ornithine + 2-oxoglutarate = N-acetyl-L-glutamate 5-semialdehyde + L-glutamate. The protein operates within amino-acid biosynthesis; L-arginine biosynthesis; N(2)-acetyl-L-ornithine from L-glutamate: step 4/4. The chain is Acetylornithine aminotransferase from Shewanella oneidensis (strain ATCC 700550 / JCM 31522 / CIP 106686 / LMG 19005 / NCIMB 14063 / MR-1).